The chain runs to 501 residues: G protein-activated inward rectifier potassium channel 1 (501 aa).

Residues 1-40 form a disordered region; it reads MSALRRKFGDDYQVVTTSSSGSGLQPQGPGQGPQQQLVPK. Residues 1-80 lie on the Cytoplasmic side of the membrane; that stretch reads MSALRRKFGD…LFTTLVDLKW (80 aa). Low complexity predominate over residues 18-37; sequence SSSGSGLQPQGPGQGPQQQL. The helical transmembrane segment at 81-105 threads the bilayer; it reads RWNLFIFILTYTVAWLFMASMWWVI. The Extracellular portion of the chain corresponds to 106-129; it reads AYTRGDLNKAHVGNYTPCVANVYN. Asn-119 is a glycosylation site (N-linked (GlcNAc...) asparagine). An intramembrane region (helical; Pore-forming) is located at residues 130-141; it reads FPSAFLFFIETE. Positions 142-148 form an intramembrane region, pore-forming; it reads ATIGYGY. Positions 143–148 match the Selectivity filter motif; sequence TIGYGY. The Extracellular segment spans residues 149–157; the sequence is RYITDKCPE. A helical membrane pass occupies residues 158–179; that stretch reads GIILFLFQSILGSIVDAFLIGC. Residues 180 to 501 lie on the Cytoplasmic side of the membrane; it reads MFIKMSQPKK…LRKMNSDRFT (322 aa). The polyphosphoinositide (PIP2)-binding stretch occupies residues 182 to 209; the sequence is IKMSQPKKRAETLMFSEHAVISMRDGKL. Phosphoserine is present on residues Ser-385 and Ser-424. Over residues 456–467 the composition is skewed to polar residues; sequence TKMLSDPMSQSV. Residues 456-501 are disordered; it reads TKMLSDPMSQSVADLPPKLQKMAGGPTRMEGNLPAKLRKMNSDRFT.

Belongs to the inward rectifier-type potassium channel (TC 1.A.2.1) family. KCNJ3 subfamily. As to quaternary structure, associates with KCNJ5/GIRK4 or KCNJ6/GIRK2 to form a G-protein activated heteromultimer pore-forming unit. The resulting inward current is much larger. Associates with KCNJ9/GIRK3 to form a G-protein activated heteromultimer pore-forming unit.

Its subcellular location is the membrane. The enzyme catalyses K(+)(in) = K(+)(out). With respect to regulation, heteromultimer composed of KCNJ3/GIRK1 and KCNJ5/GIRK4 is activated by phosphatidylinositol 4,5 biphosphate (PtdIns(4,5)P2). In terms of biological role, inward rectifier potassium channels are characterized by a greater tendency to allow potassium to flow into the cell rather than out of it. Their voltage dependence is regulated by the concentration of extracellular potassium; as external potassium is raised, the voltage range of the channel opening shifts to more positive voltages. The inward rectification is mainly due to the blockage of outward current by internal magnesium. This potassium channel is controlled by G proteins. This receptor plays a crucial role in regulating the heartbeat. Forms a functional channel in association with KCNJ9/GIRK3. This chain is G protein-activated inward rectifier potassium channel 1 (Kcnj3), found in Rattus norvegicus (Rat).